The sequence spans 210 residues: WASH complex subunit 3 (210 aa).

The stretch at 49-73 (EEKLASISLRIQQIETTLSILEAKL) forms a coiled coil. Residues 173 to 210 (LDPNLLDTPDAPVPDAVKKNTLDQDDDSDDGSESSFSD) form a disordered region. Acidic residues predominate over residues 195–204 (DQDDDSDDGS).

This sequence belongs to the CCDC53 family. As to quaternary structure, component of the WASH complex.

This is WASH complex subunit 3 from Salmo salar (Atlantic salmon).